The following is a 265-amino-acid chain: tRNA pseudouridine synthase A (265 aa).

The Nucleophile role is filled by D52. Y105 is a substrate binding site.

The protein belongs to the tRNA pseudouridine synthase TruA family.

The enzyme catalyses uridine(38/39/40) in tRNA = pseudouridine(38/39/40) in tRNA. Functionally, formation of pseudouridine at positions 38, 39 and 40 in the anticodon stem and loop of transfer RNAs. The protein is tRNA pseudouridine synthase A of Archaeoglobus fulgidus (strain ATCC 49558 / DSM 4304 / JCM 9628 / NBRC 100126 / VC-16).